We begin with the raw amino-acid sequence, 450 residues long: Ribosomal protein uS12 methylthiotransferase RimO (450 aa).

In terms of domain architecture, MTTase N-terminal spans 9-124; it reads NRINVVTLGC…LLSALEADYK (116 aa). 6 residues coordinate [4Fe-4S] cluster: Cys-18, Cys-53, Cys-87, Cys-148, Cys-152, and Cys-155. A Radical SAM core domain is found at 134–365; sequence TTPKNYAYLK…EIQSQISWEL (232 aa). Residues 367–434 form the TRAM domain; the sequence is QQKIGEVFNV…DFDLYGEPLN (68 aa).

Belongs to the methylthiotransferase family. RimO subfamily. [4Fe-4S] cluster is required as a cofactor.

The protein resides in the cytoplasm. It catalyses the reaction L-aspartate(89)-[ribosomal protein uS12]-hydrogen + (sulfur carrier)-SH + AH2 + 2 S-adenosyl-L-methionine = 3-methylsulfanyl-L-aspartate(89)-[ribosomal protein uS12]-hydrogen + (sulfur carrier)-H + 5'-deoxyadenosine + L-methionine + A + S-adenosyl-L-homocysteine + 2 H(+). Functionally, catalyzes the methylthiolation of an aspartic acid residue of ribosomal protein uS12. The polypeptide is Ribosomal protein uS12 methylthiotransferase RimO (Christiangramia forsetii (strain DSM 17595 / CGMCC 1.15422 / KT0803) (Gramella forsetii)).